The sequence spans 1400 residues: DNA-directed RNA polymerase subunit beta' (1400 aa).

Zn(2+) contacts are provided by C71, C73, C86, and C89. The Mg(2+) site is built by D462, D464, and D466. Zn(2+)-binding residues include C811, C885, C892, and C895.

This sequence belongs to the RNA polymerase beta' chain family. As to quaternary structure, the RNAP catalytic core consists of 2 alpha, 1 beta, 1 beta' and 1 omega subunit. When a sigma factor is associated with the core the holoenzyme is formed, which can initiate transcription. Mg(2+) is required as a cofactor. It depends on Zn(2+) as a cofactor.

The catalysed reaction is RNA(n) + a ribonucleoside 5'-triphosphate = RNA(n+1) + diphosphate. Its function is as follows. DNA-dependent RNA polymerase catalyzes the transcription of DNA into RNA using the four ribonucleoside triphosphates as substrates. This chain is DNA-directed RNA polymerase subunit beta', found in Brucella suis (strain ATCC 23445 / NCTC 10510).